A 22-amino-acid chain; its full sequence is Unknown endosperm protein L (22 aa).

Over residues 1–11 the composition is skewed to basic and acidic residues; sequence MRHSNKIRDEE. The disordered stretch occupies residues 1-22; sequence MRHSNKIRDEEMVNNTRLNXXA. The segment covering 13–22 has biased composition (polar residues); sequence VNNTRLNXXA.

Post-translationally, the N-terminus is blocked.

This is Unknown endosperm protein L from Hordeum vulgare (Barley).